A 502-amino-acid chain; its full sequence is Cyanidin 3-O-glucoside 5-O-glucosyltransferase (acyl-glucose) (502 aa).

Residues 1 to 30 form the signal peptide; sequence MNMSCKFEIVLLVSWWLLLVLVFGVESSMF. N-linked (GlcNAc...) asparagine glycosylation is present at Asn-2. A beta-D-glucoside contacts are provided by residues Gln-52, His-150, and 196–197; that span reads NE. Glu-197 acts as the Proton donor in catalysis. An N-linked (GlcNAc...) asparagine glycan is attached at Asn-303. Positions 320 and 388 each coordinate a beta-D-glucoside. Residue Glu-388 is the Nucleophile of the active site. Residue Asn-425 is glycosylated (N-linked (GlcNAc...) asparagine). Positions 435 and 451 each coordinate a beta-D-glucoside.

It belongs to the glycosyl hydrolase 1 family. Expressed in petals.

It localises to the vacuole. The enzyme catalyses cyanidin 3-O-beta-D-glucoside + 1-O-(trans-sinapoyl)-beta-D-glucose = cyanidin 3,5-di-O-beta-D-glucoside + (E)-sinapate. It participates in pigment biosynthesis; anthocyanin biosynthesis. Functionally, beta-glycosidase that catalyzes the transfer of glucose moiety to anthocyanidin 3-glucoside at the 5 position. Anthocyanins are ubiquitous colored pigments that are responsible for variations in petal color. Uses acyl-glucoses, but not UDP-glucose, as the glucose donor. This chain is Cyanidin 3-O-glucoside 5-O-glucosyltransferase (acyl-glucose) (AA5GT), found in Dianthus caryophyllus (Carnation).